The chain runs to 447 residues: N-succinylarginine dihydrolase (447 aa).

Residues 19-28, asparagine 110, and 137-138 each bind substrate; these read AGLSFGNEAS and HR. The active site involves glutamate 174. Arginine 212 provides a ligand contact to substrate. Residue histidine 248 is part of the active site. Substrate contacts are provided by aspartate 250 and asparagine 359. The active-site Nucleophile is the cysteine 365.

This sequence belongs to the succinylarginine dihydrolase family. As to quaternary structure, homodimer.

It catalyses the reaction N(2)-succinyl-L-arginine + 2 H2O + 2 H(+) = N(2)-succinyl-L-ornithine + 2 NH4(+) + CO2. Its pathway is amino-acid degradation; L-arginine degradation via AST pathway; L-glutamate and succinate from L-arginine: step 2/5. In terms of biological role, catalyzes the hydrolysis of N(2)-succinylarginine into N(2)-succinylornithine, ammonia and CO(2). The sequence is that of N-succinylarginine dihydrolase from Escherichia coli O9:H4 (strain HS).